The chain runs to 330 residues: Aspartate--ammonia ligase (330 aa).

This sequence belongs to the class-II aminoacyl-tRNA synthetase family. AsnA subfamily.

It is found in the cytoplasm. It carries out the reaction L-aspartate + NH4(+) + ATP = L-asparagine + AMP + diphosphate + H(+). Its pathway is amino-acid biosynthesis; L-asparagine biosynthesis; L-asparagine from L-aspartate (ammonia route): step 1/1. The sequence is that of Aspartate--ammonia ligase from Klebsiella pneumoniae subsp. pneumoniae (strain ATCC 700721 / MGH 78578).